The chain runs to 206 residues: Holliday junction branch migration complex subunit RuvA (206 aa).

Residues 1–62 form a domain I region; sequence MYDYLKGLIT…EDAQVLYGFP (62 aa). A domain II region spans residues 63–141; sequence NLDQRELFRK…SLLETIELPS (79 aa). The segment at 142-152 is flexible linker; the sequence is TEDELPLFGVH. A domain III region spans residues 153–206; the sequence is PYKHELEEAILALAALGYSEKELEKIRPLLEDNDKLETTDAYMKQALQLLLKLK.

This sequence belongs to the RuvA family. In terms of assembly, homotetramer. Forms an RuvA(8)-RuvB(12)-Holliday junction (HJ) complex. HJ DNA is sandwiched between 2 RuvA tetramers; dsDNA enters through RuvA and exits via RuvB. An RuvB hexamer assembles on each DNA strand where it exits the tetramer. Each RuvB hexamer is contacted by two RuvA subunits (via domain III) on 2 adjacent RuvB subunits; this complex drives branch migration. In the full resolvosome a probable DNA-RuvA(4)-RuvB(12)-RuvC(2) complex forms which resolves the HJ.

It is found in the cytoplasm. Functionally, the RuvA-RuvB-RuvC complex processes Holliday junction (HJ) DNA during genetic recombination and DNA repair, while the RuvA-RuvB complex plays an important role in the rescue of blocked DNA replication forks via replication fork reversal (RFR). RuvA specifically binds to HJ cruciform DNA, conferring on it an open structure. The RuvB hexamer acts as an ATP-dependent pump, pulling dsDNA into and through the RuvAB complex. HJ branch migration allows RuvC to scan DNA until it finds its consensus sequence, where it cleaves and resolves the cruciform DNA. The chain is Holliday junction branch migration complex subunit RuvA from Lysinibacillus sphaericus (strain C3-41).